The primary structure comprises 418 residues: Putative methylthiotransferase HP_0285 (418 aa).

The region spanning 2 to 110 (KKVYFKTFGC…INALLQEKKR (109 aa)) is the MTTase N-terminal domain. Residues cysteine 11, cysteine 45, cysteine 74, cysteine 144, cysteine 148, and cysteine 151 each coordinate [4Fe-4S] cluster. The 226-residue stretch at 130-355 (FVGKTRAFIK…KDLIFHKNKA (226 aa)) folds into the Radical SAM core domain.

It belongs to the methylthiotransferase family. [4Fe-4S] cluster serves as cofactor.

This is Putative methylthiotransferase HP_0285 from Helicobacter pylori (strain ATCC 700392 / 26695) (Campylobacter pylori).